The primary structure comprises 160 residues: MPVRAQRIQHVMQDTIINFYSTSDDYGDFSNFAAWPIKVDGKTWPTSEHYFQAQKFLDEKYREEIRRVSSPMVAARMGRNRSKPLRKNWESVKEQVMRKALRAKFEQHAELRVLLLATAPAKLVEHTENDAYWGDGGNGKGKNRLGYLLMELREQLAIEK.

The protein belongs to the YbiA family.

The enzyme catalyses 2,5-diamino-6-hydroxy-4-(5-phosphoribosylamino)-pyrimidine + H2O = 2,5,6-triamino-4-hydroxypyrimidine + D-ribose 5-phosphate. The catalysed reaction is 5-amino-6-(5-phospho-D-ribosylamino)uracil + H2O = 5,6-diaminouracil + D-ribose 5-phosphate. Functionally, catalyzes the hydrolysis of the N-glycosidic bond in the first two intermediates of riboflavin biosynthesis, which are highly reactive metabolites, yielding relatively innocuous products. Thus, can divert a surplus of harmful intermediates into relatively harmless products and pre-empt the damage these intermediates would otherwise do. Helps maintain flavin levels. May act on other substrates in vivo. Has no activity against GTP, nucleoside monophosphates or ADP-ribose. Is Required for swarming motility. This Shigella sonnei (strain Ss046) protein is N-glycosidase YbiA (ybiA).